A 1054-amino-acid polypeptide reads, in one-letter code: Cell wall acid trehalase ARB_03719 (1054 aa).

The N-terminal stretch at 1 to 24 (MKQPNINLAACILWLLSIITAVAA) is a signal peptide. 7 N-linked (GlcNAc...) asparagine glycosylation sites follow: Asn-138, Asn-178, Asn-183, Asn-207, Asn-239, Asn-277, and Asn-309. 450–451 (WD) contacts substrate. Asn-495, Asn-515, Asn-572, and Asn-580 each carry an N-linked (GlcNAc...) asparagine glycan. Glu-586 acts as the Proton donor in catalysis. Residues Asn-620 and Asn-648 are each glycosylated (N-linked (GlcNAc...) asparagine). 654 to 655 (KQ) lines the substrate pocket. N-linked (GlcNAc...) asparagine glycosylation is found at Asn-808 and Asn-844. Residues 950-974 (PLHPVTDPENGDASGSSPTTPASSV) form a disordered region. Residues 962 to 974 (ASGSSPTTPASSV) show a composition bias toward low complexity. N-linked (GlcNAc...) asparagine glycosylation is found at Asn-1004, Asn-1007, and Asn-1039.

The protein belongs to the glycosyl hydrolase 65 family.

The protein localises to the secreted. It is found in the cell wall. It carries out the reaction alpha,alpha-trehalose + H2O = alpha-D-glucose + beta-D-glucose. Functionally, cell wall acid trehalase that catalyzes hydrolysis of the disaccharide trehalose and required for growth on trehalose as carbon source. Plays a role in virulence. The sequence is that of Cell wall acid trehalase ARB_03719 from Arthroderma benhamiae (strain ATCC MYA-4681 / CBS 112371) (Trichophyton mentagrophytes).